We begin with the raw amino-acid sequence, 462 residues long: MLKIYNTLSRQKEEFKPIHAGKIGMYVCGITVYDLCHIGHGRTFAAFDVVARYLRYSGYQLKYVRNITDIDDKIIKRAQENGESIEQLTNRMIGEMHKDFAALNILPPDLEPRATRHITEIVELVEKLIAREHAYVASNGDVMFSVDSDPQYGSLSRQDLDQLQAGARVEVAADVKRNPMDFVLWKMSKADEPGWASPWGNGRPGWHIECSAMNCKQLGEHFDIHGGGSDLMFPHHENEIAQSTCAHDGPYVNYWMHSGMVMIDREKMSKSLNNFFTVRDVLEHYDAETVRYFLMSGHYRSQLNYGEDNLNQARSALERLYIALRNTDTGATPAGGEEFETRFREAMDDDFNTPEAYSALFDLAREVNRMKAEAPAAADGLAARLRVLGGVLGLLEQDPEQFLQSGANSNDEEVAQIEALIQMRIDARNEKNWAQADVARDRLNEMGIVLEDGAGGTRWRRK.

Cys28 is a binding site for Zn(2+). Positions Ile30–His40 match the 'HIGH' region motif. Zn(2+) is bound by residues Cys210, His235, and Glu239. Residues Lys267–Ser271 carry the 'KMSKS' region motif. Residue Lys270 participates in ATP binding.

This sequence belongs to the class-I aminoacyl-tRNA synthetase family. In terms of assembly, monomer. Zn(2+) serves as cofactor.

It is found in the cytoplasm. It carries out the reaction tRNA(Cys) + L-cysteine + ATP = L-cysteinyl-tRNA(Cys) + AMP + diphosphate. This Erwinia tasmaniensis (strain DSM 17950 / CFBP 7177 / CIP 109463 / NCPPB 4357 / Et1/99) protein is Cysteine--tRNA ligase.